The primary structure comprises 432 residues: Lipoyl synthase, mitochondrial (432 aa).

Low complexity predominate over residues 32 to 68 (TLGATPGSTSTSTSTSTATTTTLESTSTSTSGDATET). Residues 32 to 71 (TLGATPGSTSTSTSTSTATTTTLESTSTSTSGDATETTIK) are disordered. The [4Fe-4S] cluster site is built by Cys-150, Cys-155, Cys-161, Cys-180, Cys-184, Cys-187, and Ser-395. The Radical SAM core domain occupies 165 to 384 (KKSEATATIM…RDVALEMGFL (220 aa)).

It belongs to the radical SAM superfamily. Lipoyl synthase family. The cofactor is [4Fe-4S] cluster.

The protein localises to the mitochondrion. The enzyme catalyses [[Fe-S] cluster scaffold protein carrying a second [4Fe-4S](2+) cluster] + N(6)-octanoyl-L-lysyl-[protein] + 2 oxidized [2Fe-2S]-[ferredoxin] + 2 S-adenosyl-L-methionine + 4 H(+) = [[Fe-S] cluster scaffold protein] + N(6)-[(R)-dihydrolipoyl]-L-lysyl-[protein] + 4 Fe(3+) + 2 hydrogen sulfide + 2 5'-deoxyadenosine + 2 L-methionine + 2 reduced [2Fe-2S]-[ferredoxin]. The protein operates within protein modification; protein lipoylation via endogenous pathway; protein N(6)-(lipoyl)lysine from octanoyl-[acyl-carrier-protein]: step 2/2. Functionally, catalyzes the radical-mediated insertion of two sulfur atoms into the C-6 and C-8 positions of the octanoyl moiety bound to the lipoyl domains of lipoate-dependent enzymes, thereby converting the octanoylated domains into lipoylated derivatives. In Lodderomyces elongisporus (strain ATCC 11503 / CBS 2605 / JCM 1781 / NBRC 1676 / NRRL YB-4239) (Yeast), this protein is Lipoyl synthase, mitochondrial.